A 223-amino-acid chain; its full sequence is Adenylate kinase 4, mitochondrial (223 aa).

15-20 (GSGKGT) is a binding site for a ribonucleoside 5'-triphosphate. Residues 35-64 (SSGHLLRENLKTGTEVGDVAKQYLEKGLLV) are NMP. Residues serine 36 and arginine 41 each contribute to the AMP site. Lysine 60 is modified (N6-succinyllysine). AMP is bound by residues 62–64 (LLV), 89–92 (GFPR), and glutamine 96. The tract at residues 125–162 (RRWIHPSSGRVYNLDFNPPQVQGIDDITGEPLVQQEDD) is LID. A ribonucleoside 5'-triphosphate-binding positions include arginine 126 and 135–136 (VY). Arginine 170 contributes to the AMP binding site. At lysine 175 the chain carries N6-acetyllysine. 2 positions are modified to N6-acetyllysine; alternate: lysine 179 and lysine 186. Residues lysine 179 and lysine 186 each carry the N6-succinyllysine; alternate modification. Threonine 199 lines the a ribonucleoside 5'-triphosphate pocket.

The protein belongs to the adenylate kinase family. AK3 subfamily. Monomer. Interacts with SLC25A5/ANT2. Expressed in kidney, liver, stomach, brain, spinal cord, heart, ovary, oviduct, colon, jejunum, ileum and testis (at protein level). In the brain, expressed in the pyramidal cells of the cerebrum and glial cells in the cerebellum (at protein level). In the heart, expressed by myocytes (at protein level). In the kidney, expressed in the proximal to distal tubule in the cortex and the outer and inner zones of the medulla (at protein level). In the stomach, expressed in stratified squamous epithelia in the forestomach and in the gastric pit and mucus producing cells of the glandular stomach (at protein level). Expressed in epithelial cells of the jejunum, ileum, and colon (at protein level). In the testis, expressed by spermatocytes (at protein level). In the ovaries, expressed by oocytes, follicular epithelial cells, and corpus luteum cells (at protein level). In the oviduct, expressed in the epithelia of the isthmus and the ciliated cells of the ampulla (at protein level). Expressed in the pyramidal cells in the hippocampus.

The protein resides in the mitochondrion matrix. It carries out the reaction a ribonucleoside 5'-phosphate + ATP = a ribonucleoside 5'-diphosphate + ADP. It catalyses the reaction AMP + ATP = 2 ADP. The catalysed reaction is GTP + AMP = GDP + ADP. The enzyme catalyses CMP + ATP = CDP + ADP. It carries out the reaction GTP + CMP = CDP + GDP. It catalyses the reaction dAMP + ATP = dADP + ADP. The catalysed reaction is dCMP + ATP = dCDP + ADP. The enzyme catalyses a 2'-deoxyribonucleoside 5'-diphosphate + ATP = a 2'-deoxyribonucleoside 5'-triphosphate + ADP. It carries out the reaction a ribonucleoside 5'-diphosphate + ATP = a ribonucleoside 5'-triphosphate + ADP. It catalyses the reaction GDP + ATP = GTP + ADP. The catalysed reaction is CDP + GTP = CTP + GDP. The enzyme catalyses CDP + ATP = CTP + ADP. It carries out the reaction UDP + ATP = UTP + ADP. It catalyses the reaction GTP + UDP = UTP + GDP. The catalysed reaction is dADP + GTP = dATP + GDP. The enzyme catalyses dCDP + GTP = dCTP + GDP. It carries out the reaction dCDP + ATP = dCTP + ADP. It catalyses the reaction dGDP + ATP = dGTP + ADP. The catalysed reaction is dTDP + GTP = dTTP + GDP. The enzyme catalyses dTDP + ATP = dTTP + ADP. In terms of biological role, broad-specificity mitochondrial nucleoside phosphate kinase involved in cellular nucleotide homeostasis by catalyzing nucleoside-phosphate interconversions. Similar to other adenylate kinases, preferentially catalyzes the phosphorylation of the nucleoside monophosphate AMP with ATP as phosphate donor to produce ADP. Phosphorylates only AMP when using GTP as phosphate donor. In vitro, can also catalyze the phosphorylation of CMP, dAMP and dCMP and use GTP as an alternate phosphate donor. Moreover, exhibits a diphosphate kinase activity, producing ATP, CTP, GTP, UTP, TTP, dATP, dCTP and dGTP from the corresponding diphosphate substrates with either ATP or GTP as phosphate donors. Plays a role in controlling cellular ATP levels by regulating phosphorylation and activation of the energy sensor protein kinase AMPK. Plays a protective role in the cellular response to oxidative stress. The sequence is that of Adenylate kinase 4, mitochondrial from Mus musculus (Mouse).